The primary structure comprises 235 residues: Small ribosomal subunit protein uS2c (235 aa).

This sequence belongs to the universal ribosomal protein uS2 family.

Its subcellular location is the plastid. The protein localises to the chloroplast. This Marchantia polymorpha (Common liverwort) protein is Small ribosomal subunit protein uS2c (rps2).